A 357-amino-acid polypeptide reads, in one-letter code: Cytoplasmic tRNA 2-thiolation protein 1 (357 aa).

Positions 314 to 348 (GVSRTRGRRGEKAGLHPDVGRGGGGGSSGPAEVAS) are disordered. Positions 321-332 (RRGEKAGLHPDV) are enriched in basic and acidic residues.

It belongs to the TtcA family. CTU1/NCS6/ATPBD3 subfamily.

Its subcellular location is the cytoplasm. The protein operates within tRNA modification; 5-methoxycarbonylmethyl-2-thiouridine-tRNA biosynthesis. Plays a central role in 2-thiolation of mcm(5)S(2)U at tRNA wobble positions of tRNA(Lys), tRNA(Glu) and tRNA(Gln). Directly binds tRNAs and probably acts by catalyzing adenylation of tRNAs, an intermediate required for 2-thiolation. It is unclear whether it acts as a sulfurtransferase that transfers sulfur from thiocarboxylated URM1 onto the uridine of tRNAs at wobble position. The sequence is that of Cytoplasmic tRNA 2-thiolation protein 1 from Chlamydomonas reinhardtii (Chlamydomonas smithii).